Consider the following 508-residue polypeptide: Cell death protein 3 (508 aa).

The propeptide occupies 1 to 223 (MMRQDRRNLL…FHEEDMNYVD (223 aa)). Residues 2 to 91 (MRQDRRNLLE…HELAAVLEPL (90 aa)) form the CARD domain. Disordered regions lie at residues 106 to 130 (PMSPASHRRSRALSPSTFSSPTRVH) and 148 to 184 (YTRARSTSRSSRPLHASDRHNYVSPSNSFQSQPSSAN). The span at 118–127 (LSPSTFSSPT) shows a compositional bias: polar residues. Over residues 171-184 (SPSNSFQSQPSSAN) the composition is skewed to low complexity. Catalysis depends on residues His317 and Cys360. Positions 392 to 407 (GPLFNFLGCVRPQAQQ) are required for interaction with ced-4.

The protein belongs to the peptidase C14A family. The active form is probably a heterodimer of the p17 subunit with either the p15 or p13 subunit which are all derived from the precursor by autocatalysis. Interacts with octameric ced-4 (two ced-3 zymogens per one ced-4 octamer); the interaction causes the autoproteolytic cleavage and activation of ced-3. Processed ced-3 also interacts with ced-4 octamer to form a stable holoenzyme. Interacts (via large subunit p17) with csp-3; the interaction prevents ced-3 autoactivation and delays ced-4-induced ced-3 processing. Interacts (via large subunit p17 or small subunit p13 or p15) with csp-2; the interaction inhibits ced-3 autoactivation. Interacts (via propeptide) with nucleoporin npp-14; the interaction tethers ced-3 to the nuclear membrane and prevents its autoprocessing in absence of ced-4. Interacts with dct-1. May form a complex composed of ced-3, ced-4 and mac-1. Autocatalytic cleavage removes the propeptide and generates the catalytic subunit p17 and two non-catalytic subunits p15 and p13; autoproteolysis is induced by ced-4 oligomer. Cleaved by caspase csp-1 probably at Asp-146 and Asp-376.

The protein resides in the nucleus membrane. It is found in the perikaryon. The protein localises to the synapse. Its subcellular location is the mitochondrion. It localises to the cytoplasm. The protein resides in the perinuclear region. It catalyses the reaction Strict requirement for an Asp residue at position P1 and has a preferred cleavage sequence of Asp-Glu-Val-Asp-|-.. With respect to regulation, octameric ced-4 activates zymogen autoprocessing and enhances activity of processed ced-3. Zymogen autoactivation is inhibited by csp-3. csp-3 has no effect on active ced-3. Zymogen autoactivation is inhibited by csp-2. Inhibited by cysteine protease inhibitor iodoacetic acid (CH3COOI). Inhibited by benzyloxycarbonyl-DEVD-fluoro-methyl ketone (zDEVD-fmk). Inhibited by benzyloxycarbonyl-VAD-fluoro-methyl ketone (zVAD-fmk). Not inhibited by N-[N-(L-3-transcarboxirane-2-carbonyl)-leucyl]-agmatine (E-64) or by the serine and cysteine protease inhibitor L-1-chloro-3-[4-to-osylamido]-7-amino-2-heptanone (TLCK). In terms of biological role, acts as a cysteine protease in controlling programmed cell death (apoptosis) by proteolytically activating or inactivating a wide range of substrates. Component of the egl-1, ced-9, ced-4 and ced-3 apoptotic signaling cascade required for the initiation of programmed cell death in cells fated to die during embryonic and postembryonic development. During oogenesis, required for germline apoptosis downstream of ced-9 and ced-4 but independently of egl-1. By cleaving and activating ced-8, promotes phosphatidylserine exposure on the surface of apoptotic cells; phosphatidylserine is a specific marker only present at the surface of apoptotic cells and acts as a specific signal for engulfment. By cleaving and converting dcr-1 into a deoxyribonuclease (DNase), promotes apoptotic chromosomal DNA fragmentation. By cleaving mitochondrial fission protein drp-1, may regulate the removal of mitochondria during apoptosis. During germline apoptosis, cleaves translation initiation factor ifg-1 (isoform p170) promoting cap-independent translation. During male tail morphogenesis, promotes apoptosis of the tail-spike cell downstream of ced-4 but independently of egl-1 and ced-9. By cleaving cnt-1, prevents the activation of the prosurvival akt-1/2 signaling pathway and thus promotes apoptosis. Downstream of ced-4, may play a role in sex-specific cell apoptosis by cleaving sex-determining protein fem-1. May regulate germline apoptosis in response to DNA damage, probably downstream of let-60/ras and mpk-1 pathway. Cleaves ced-9 in vitro. Cleaves csp-2 isoform b resulting in the removal of the propeptide and the generation of csp-2 subunit p31 in vitro. Independently of its apoptotic role has additional functions. Probably by cleaving and thereby activating actin-severing protein gsnl-1, required for the elimination of transient presynaptic components during larval development downstream of egl-1, ced-9 and ced-4 pathway. Together with ain-1, a component of the miRNA-induced-silencing complex (miRISC), regulates temporal cell fate patterning during larval development. Acts in cell fate patterning by cleaving heterochronic protein lin-28, likely promoting its degradation. Also cleaves heterochronic protein lin-14 and exonuclease disl-2 in vitro. Downstream of calreticulin crt-1 and ced-4 and independently of egl-1 and ced-9, plays a role in the initial steps of axonal regrowth following axotomy. Cleaves 14-3-3-like protein ftt-2, tubulin tbb-2 and calreticulin crt-1 in vitro. Plays also a role in resistance to S.typhimurium-mediated infection. The sequence is that of Cell death protein 3 from Caenorhabditis remanei (Caenorhabditis vulgaris).